Here is a 643-residue protein sequence, read N- to C-terminus: MSGGPAVRVSIESSCERQVQEVSLDGMETYVPPLSMSQNLAKLVQRIDFCQSSDSEEDGAERARAGREQWKQEPEEDEGQLKFQPSLWPWDSVRNNLRSALTEMCVLHDVLSVLKERKYMTLDPVSQDPAMAKTPQVFQLISKKKSLGTAAQLLLKGAEKLSKSVSENQEQRRQRDFNSELLRLRSQWKLRKVGDKILGDLSYRSAGSLFPHHGTFEVIKNTDIDLDKKIPDDYCPLNVQIPSDLEGSAYIKVSIQKQSPDIGDLGTVNLFRRQAKAKPASQMWHSRLEAAQNVLLCKEIFAQLSREAVQIKSQIPHIVVKNQIISQPFPGLQLSISLCHSTGEKKSQRSSPDKSKPDDHLYVLEHNLHQLIREFHKQTLSSVVMPHPASAPFGHKRLRLAGPLAYDKAEISSLQQTEGLLEKIIKQAKHIFLRSRTARTIDSLASRIEDPQIQAHWSNINDVYESSVKVLITSQGYEQICKSIQLQLNICVEQIRVVHRDGRVITLSHQEQELQDFLLSQMSQHQVHAVQQLAKVMGWHVLSFSNHVGLGSIESIGNASSITVASPSGEYAISVRNGPESGCKVLVQFPRSQAKDAGRSDAVQDGKWTQLRGAHREVHWDRMEGKNFVYKMELLMAALTPCP.

Positions 53-82 (SDSEEDGAERARAGREQWKQEPEEDEGQLK) are disordered. Over residues 60-73 (AERARAGREQWKQE) the composition is skewed to basic and acidic residues.

Belongs to the Mediator complex subunit 17 family. In terms of assembly, component of the Mediator complex.

The protein resides in the nucleus. Component of the Mediator complex, a coactivator involved in the regulated transcription of nearly all RNA polymerase II-dependent genes. Mediator functions as a bridge to convey information from gene-specific regulatory proteins to the basal RNA polymerase II transcription machinery. Mediator is recruited to promoters by direct interactions with regulatory proteins and serves as a scaffold for the assembly of a functional preinitiation complex with RNA polymerase II and the general transcription factors. In Danio rerio (Zebrafish), this protein is Mediator of RNA polymerase II transcription subunit 17 (med17).